A 379-amino-acid polypeptide reads, in one-letter code: Chaperone protein DnaJ (379 aa).

Residues 4–69 (DLYETLGVKK…QKRAAYDRYG (66 aa)) form the J domain. The CR-type zinc finger occupies 137-215 (GKTAQIRVPT…CHGQGRVTEE (79 aa)). Zn(2+) contacts are provided by C150, C153, C167, C170, C189, C192, C203, and C206. CXXCXGXG motif repeat units lie at residues 150 to 157 (CDVCTGSG), 167 to 174 (CATCQGSG), 189 to 196 (CPTCGGRG), and 203 to 210 (CTKCHGQG).

This sequence belongs to the DnaJ family. In terms of assembly, homodimer. Requires Zn(2+) as cofactor.

Its subcellular location is the cytoplasm. Participates actively in the response to hyperosmotic and heat shock by preventing the aggregation of stress-denatured proteins and by disaggregating proteins, also in an autonomous, DnaK-independent fashion. Unfolded proteins bind initially to DnaJ; upon interaction with the DnaJ-bound protein, DnaK hydrolyzes its bound ATP, resulting in the formation of a stable complex. GrpE releases ADP from DnaK; ATP binding to DnaK triggers the release of the substrate protein, thus completing the reaction cycle. Several rounds of ATP-dependent interactions between DnaJ, DnaK and GrpE are required for fully efficient folding. Also involved, together with DnaK and GrpE, in the DNA replication of plasmids through activation of initiation proteins. The chain is Chaperone protein DnaJ from Sinorhizobium fredii (strain NBRC 101917 / NGR234).